The primary structure comprises 237 residues: BTB/POZ domain-containing protein KCTD6 (237 aa).

The interval M1 to C104 is interaction with ANK1 isoform Mu17. Residues M10–P110 are interaction with CUL3. The BTB domain maps to D12–L81. The segment at P113 to E187 is interaction with USP21.

Homopentamer. Interacts with KCTD11; KCTD6 and KCTD11 may associate in pentameric assemblies. Interacts (via BTB domain) with CUL3; initially a 4:4 stoichiometry has been reported, however, electron microscopy revealed pentameric states with a five-pointed pinwheel shape. The interaction with CUL3 is indicative for a participation in a BCR (BTB-CUL3-RBX1) E3 ubiquitin-protein ligase complex. Interacts with HDAC1; probably indirect as the interaction is requires the presence of KCTD11. Interacts with USP21 (preferentially catalytic inactive form). Interacts with ANK1 isoform Mu17; detected in striated muscle. Interacts with USP11. In terms of tissue distribution, highly expressed in cerebellum and brain. Expression is down-regulated in medulloblastoma.

It localises to the cytoplasm. The protein localises to the myofibril. The protein resides in the sarcomere. It is found in the m line. The protein operates within protein modification; protein ubiquitination. Functionally, probable substrate-specific adapter of a BCR (BTB-CUL3-RBX1) E3 ubiquitin-protein ligase complex mediating the ubiquitination and subsequent proteasomal degradation of target proteins. Promotes the ubiquitination of HDAC1; the function seems to depend on KCTD11:KCTD6 oligomerization. Can function as antagonist of the Hedgehog pathway by affecting the nuclear transfer of transcription factor GLI1; the function probably occurs via HDAC1 down-regulation, keeping GLI1 acetylated and inactive. Inhibits cell growth and tumorigenicity of medulloblastoma (MDB). Involved in regulating protein levels of ANK1 isoform Mu17 probably implicating CUL3-dependent proteasomal degradation. In Homo sapiens (Human), this protein is BTB/POZ domain-containing protein KCTD6 (KCTD6).